The primary structure comprises 114 residues: Kita-kyushu lung cancer antigen 1 homolog (114 aa).

Residues 1–4 (MNVY) lie on the Cytoplasmic side of the membrane. Residues 5-22 (LLLASGILCALMTVFWKY) form a helical; Signal-anchor for type II membrane protein membrane-spanning segment. At 23–114 (RRFQRNTGEM…RSASAHRKST (92 aa)) the chain is on the extracellular side. N84 carries an N-linked (GlcNAc...) asparagine glycan.

It is found in the cell membrane. In Macaca fascicularis (Crab-eating macaque), this protein is Kita-kyushu lung cancer antigen 1 homolog (CT83).